The following is a 145-amino-acid chain: uncharacterized protein (145 aa).

The tract at residues 1–59 is disordered; that stretch reads MSTGTPHYAADRSKSRKSNNNRSIPFRTPTTQKVVKTSIRLGPVNPPTPTRNTQGGHGF.

This is an uncharacterized protein from Caenorhabditis elegans.